A 347-amino-acid polypeptide reads, in one-letter code: NADH-ubiquinone oxidoreductase chain 2 (347 aa).

11 consecutive transmembrane segments (helical) span residues 1–21 (MNPM…SIVM), 25–45 (HWFL…PVLM), 60–80 (FLTQ…NLMF), 96–116 (MLLT…FWVP), 127–147 (GLIL…QIYP), 149–169 (INTN…GWGG), 178–198 (IMAY…IYNP), 202–222 (LLNL…LIFA), 239–259 (IITI…PLTG), 274–294 (NSVI…FFYM), and 326–346 (MMPL…FILL).

The protein belongs to the complex I subunit 2 family. Core subunit of respiratory chain NADH dehydrogenase (Complex I) which is composed of 45 different subunits. Interacts with TMEM242.

It localises to the mitochondrion inner membrane. The catalysed reaction is a ubiquinone + NADH + 5 H(+)(in) = a ubiquinol + NAD(+) + 4 H(+)(out). Its function is as follows. Core subunit of the mitochondrial membrane respiratory chain NADH dehydrogenase (Complex I) that is believed to belong to the minimal assembly required for catalysis. Complex I functions in the transfer of electrons from NADH to the respiratory chain. The immediate electron acceptor for the enzyme is believed to be ubiquinone. The sequence is that of NADH-ubiquinone oxidoreductase chain 2 from Suncus etruscus (Etruscan shrew).